The following is a 127-amino-acid chain: Fluoride-specific ion channel FluC (127 aa).

4 helical membrane-spanning segments follow: residues 3-23 (ALLLVGAGGAAGAVARYLLGV), 36-56 (GTFAANILGGFLMGLLAGGLA), 72-92 (VGALGGFTTFSAYSLEVALMI), and 101-121 (FAYSLGSVALAVAALFAGLLL). Residues Gly-76 and Thr-79 each contribute to the Na(+) site.

It belongs to the fluoride channel Fluc/FEX (TC 1.A.43) family.

Its subcellular location is the cell inner membrane. The catalysed reaction is fluoride(in) = fluoride(out). Na(+) is not transported, but it plays an essential structural role and its presence is essential for fluoride channel function. In terms of biological role, fluoride-specific ion channel. Important for reducing fluoride concentration in the cell, thus reducing its toxicity. This chain is Fluoride-specific ion channel FluC, found in Phenylobacterium zucineum (strain HLK1).